Here is a 269-residue protein sequence, read N- to C-terminus: Cytochrome c oxidase subunit 3 (269 aa).

7 consecutive transmembrane segments (helical) span residues 24 to 44, 46 to 66, 90 to 110, 132 to 152, 167 to 187, 207 to 227, and 247 to 267; these read FYNS…MHGF, NMYI…TLWF, GVGL…WTFF, IDPF…GVTV, ALYG…FQGI, FSTG…SVGL, and ILYW…IYFW.

This sequence belongs to the cytochrome c oxidase subunit 3 family. In terms of assembly, component of the cytochrome c oxidase (complex IV, CIV), a multisubunit enzyme composed of a catalytic core of 3 subunits and several supernumerary subunits. The complex exists as a monomer or a dimer and forms supercomplexes (SCs) in the inner mitochondrial membrane with ubiquinol-cytochrome c oxidoreductase (cytochrome b-c1 complex, complex III, CIII).

It localises to the mitochondrion inner membrane. It carries out the reaction 4 Fe(II)-[cytochrome c] + O2 + 8 H(+)(in) = 4 Fe(III)-[cytochrome c] + 2 H2O + 4 H(+)(out). Functionally, component of the cytochrome c oxidase, the last enzyme in the mitochondrial electron transport chain which drives oxidative phosphorylation. The respiratory chain contains 3 multisubunit complexes succinate dehydrogenase (complex II, CII), ubiquinol-cytochrome c oxidoreductase (cytochrome b-c1 complex, complex III, CIII) and cytochrome c oxidase (complex IV, CIV), that cooperate to transfer electrons derived from NADH and succinate to molecular oxygen, creating an electrochemical gradient over the inner membrane that drives transmembrane transport and the ATP synthase. Cytochrome c oxidase is the component of the respiratory chain that catalyzes the reduction of oxygen to water. Electrons originating from reduced cytochrome c in the intermembrane space (IMS) are transferred via the dinuclear copper A center (CU(A)) of subunit 2 and heme A of subunit 1 to the active site in subunit 1, a binuclear center (BNC) formed by heme A3 and copper B (CU(B)). The BNC reduces molecular oxygen to 2 water molecules using 4 electrons from cytochrome c in the IMS and 4 protons from the mitochondrial matrix. The sequence is that of Cytochrome c oxidase subunit 3 (COXIII) from Trichophyton rubrum (Athlete's foot fungus).